We begin with the raw amino-acid sequence, 319 residues long: 2,3,4,5-tetrahydropyridine-2,6-dicarboxylate N-succinyltransferase (319 aa).

D167 and E184 together coordinate Mg(2+). Residue E200 is the Acyl-anhydride intermediate of the active site. Succinyl-CoA contacts are provided by residues R202, G217, S220, A243, 258 to 259 (EA), and K278.

The protein belongs to the type 2 tetrahydrodipicolinate N-succinyltransferase family. In terms of assembly, homotrimer.

Its subcellular location is the cytoplasm. It catalyses the reaction (S)-2,3,4,5-tetrahydrodipicolinate + succinyl-CoA + H2O = (S)-2-succinylamino-6-oxoheptanedioate + CoA. It participates in amino-acid biosynthesis; L-lysine biosynthesis via DAP pathway; LL-2,6-diaminopimelate from (S)-tetrahydrodipicolinate (succinylase route): step 1/3. Catalyzes the conversion of the cyclic tetrahydrodipicolinate (THDP) into the acyclic N-succinyl-L-2-amino-6-oxopimelate using succinyl-CoA. In Salinispora tropica (strain ATCC BAA-916 / DSM 44818 / JCM 13857 / NBRC 105044 / CNB-440), this protein is 2,3,4,5-tetrahydropyridine-2,6-dicarboxylate N-succinyltransferase.